Reading from the N-terminus, the 884-residue chain is Androgen receptor (884 aa).

A modulating region spans residues 1 to 522 (MEVQLGLGRV…PIDYYFPPQK (522 aa)). The interval 1–551 (MEVQLGLGRV…GSCKVFFKRA (551 aa)) is interaction with ZNF318. Disordered regions lie at residues 33–145 (VIQN…TLSL) and 174–207 (QQQQ…YLGG). Low complexity-rich tracts occupy residues 55–79 (QQQQ…PQAQ) and 174–196 (QQQQ…AAGA). The residue at position 61 (Ser61) is a Phosphoserine; by CDK9. Ser75 bears the Phosphoserine mark. Polar residues predominate over residues 197–207 (PTSSKDSYLGG). Tyr204 bears the Phosphotyrosine; by CSK mark. Ser237 carries the phosphoserine modification. Tyr248 bears the Phosphotyrosine; by CSK and TNK2 mark. Residues 275-294 (DDSADKGTEEPAEYTPFKGS) form a disordered region. 4 positions are modified to phosphotyrosine; by CSK: Tyr288, Tyr327, Tyr338, and Tyr343. The residue at position 344 (Tyr344) is a Phosphotyrosine; by CSK and TNK2. Residue Lys367 forms a Glycyl lysine isopeptide (Lys-Gly) (interchain with G-Cter in SUMO) linkage. At Tyr374 the chain carries Phosphotyrosine; by CSK. A Glycyl lysine isopeptide (Lys-Gly) (interchain with G-Cter in SUMO) cross-link involves residue Lys485. Phosphotyrosine; by CSK is present on residues Tyr499 and Tyr516. The interval 516–883 (YYFPPQKTCL…GKVKPIYFHT (368 aa)) is interaction with LPXN. The nuclear receptor DNA-binding region spans 523–596 (TCLICGDEAS…AGMTLGARKL (74 aa)). NR C4-type zinc fingers lie at residues 524-544 (CLIC…CGSC) and 560-584 (CASR…LRKC). The interaction with HIPK3 stretch occupies residues 536 to 626 (YGALTCGSCK…TEESSQKLTV (91 aa)). Residues 556–883 (QKYLCASRND…GKVKPIYFHT (328 aa)) are interaction with CCAR1. The interaction with KAT7 stretch occupies residues 589-883 (MTLGARKLKK…GKVKPIYFHT (295 aa)). Ser615 carries the post-translational modification Phosphoserine; by STK4/MST1. In terms of domain architecture, NR LBD spans 633-864 (ECQPIFLNVL…DFPEMMAEII (232 aa)). 17beta-hydroxy-5alpha-androstan-3-one contacts are provided by Asn670 and Arg717. Residues Lys810 and Lys812 each participate in a glycyl lysine isopeptide (Lys-Gly) (interchain with G-Cter in ubiquitin) cross-link. Thr842 contacts 17beta-hydroxy-5alpha-androstan-3-one. Position 880 is a phosphotyrosine; by CSK (Tyr880).

This sequence belongs to the nuclear hormone receptor family. NR3 subfamily. Binds DNA as a homodimer. Part of a ternary complex containing AR, EFCAB6/DJBP and PARK7. Interacts with HIPK3 and NR0B2 in the presence of androgen. The ligand binding domain interacts with KAT7/HBO1 in the presence of dihydrotestosterone. Interacts with EFCAB6/DJBP, PQBP1, RANBP9, RBAK, SPDEF, SRA1, TGFB1I1 and RREB1. Interacts with ZMIZ1/ZIMP10 and ZMIZ2/ZMIP7 which both enhance its transactivation activity. Interacts with SLC30A9 and RAD54L2/ARIP4. Interacts with MACROD1 (via macro domain). Interacts via the ligand-binding domain with LXXLL and FXXLF motifs from NCOA1, NCOA2, NCOA3 and MAGEA11. Interacts (via nuclear receptor DNA binding domain and nuclear receptor ligand binding domain) with NCOA4. The AR N-terminal poly-Gln region binds Ran resulting in enhancement of AR-mediated transactivation. Ran-binding decreases as the poly-Gln length increases. Interacts with HIP1 (via coiled coil domain). Interacts (via ligand-binding domain) with TRIM68. Interacts with TNK2. Interacts with USP26. Interacts with RNF6. Interacts (regulated by RNF6 probably through polyubiquitination) with RNF14; regulates AR transcriptional activity. Interacts with PRMT2 and TRIM24. Interacts with RACK1. Interacts with RANBP10; this interaction enhances dihydrotestosterone-induced AR transcriptional activity. Interacts with PRPF6 in a hormone-independent way; this interaction enhances dihydrotestosterone-induced AR transcriptional activity. Interacts with STK4/MST1. Interacts with ZIPK/DAPK3. Interacts with LPXN. Interacts with MAK. Part of a complex containing AR, MAK and NCOA3. Interacts with CRY1. Interacts with CCAR1 and GATA2. Interacts with ZNF318. Interacts with BUD31. Interacts with ARID4A. Interacts with ARID4B. Interacts (via NR LBD domain) with ZBTB7A; the interaction is direct and androgen-dependent. Interacts with NCOR1. Interacts with NCOR2. Interacts with CRY2 in a ligand-dependent manner. Phosphorylated in prostate cancer cells in response to several growth factors including EGF. Phosphorylation is induced by c-Src kinase (CSK). Tyr-499 is one of the major phosphorylation sites and an increase in phosphorylation and Src kinase activity is associated with prostate cancer progression. Phosphorylation by TNK2 enhances the DNA-binding and transcriptional activity. Phosphorylation at Ser-61 by CDK9 regulates AR promoter selectivity and cell growth. Post-translationally, sumoylated on Lys-367 (major) and Lys-485. Ubiquitinated. Deubiquitinated by USP26. 'Lys-6' and 'Lys-27'-linked polyubiquitination by RNF6 modulates AR transcriptional activity and specificity. In terms of processing, palmitoylated by ZDHHC7 and ZDHHC21. Palmitoylation is required for plasma membrane targeting and for rapid intracellular signaling via ERK and AKT kinases and cAMP generation.

Its subcellular location is the nucleus. It is found in the cytoplasm. Functionally, steroid hormone receptors are ligand-activated transcription factors that regulate eukaryotic gene expression and affect cellular proliferation and differentiation in target tissues. Transcription factor activity is modulated by bound coactivator and corepressor proteins like ZBTB7A that recruits NCOR1 and NCOR2 to the androgen response elements/ARE on target genes, negatively regulating androgen receptor signaling and androgen-induced cell proliferation. Transcription activation is also down-regulated by NR0B2. Activated, but not phosphorylated, by HIPK3 and ZIPK/DAPK3. The sequence is that of Androgen receptor (AR) from Eulemur fulvus collaris (Collared brown lemur).